A 250-amino-acid chain; its full sequence is UDP-2,3-diacylglucosamine hydrolase (250 aa).

Residues aspartate 8, histidine 10, aspartate 41, asparagine 79, and histidine 114 each coordinate Mn(2+). 79-80 (NR) serves as a coordination point for substrate. Aspartate 122, serine 160, aspartate 172, glutamine 175, and histidine 203 together coordinate substrate. Residues histidine 203 and histidine 205 each contribute to the Mn(2+) site.

Belongs to the LpxH family. Mn(2+) serves as cofactor.

Its subcellular location is the cell inner membrane. It catalyses the reaction UDP-2-N,3-O-bis[(3R)-3-hydroxytetradecanoyl]-alpha-D-glucosamine + H2O = 2-N,3-O-bis[(3R)-3-hydroxytetradecanoyl]-alpha-D-glucosaminyl 1-phosphate + UMP + 2 H(+). The protein operates within glycolipid biosynthesis; lipid IV(A) biosynthesis; lipid IV(A) from (3R)-3-hydroxytetradecanoyl-[acyl-carrier-protein] and UDP-N-acetyl-alpha-D-glucosamine: step 4/6. Hydrolyzes the pyrophosphate bond of UDP-2,3-diacylglucosamine to yield 2,3-diacylglucosamine 1-phosphate (lipid X) and UMP by catalyzing the attack of water at the alpha-P atom. Involved in the biosynthesis of lipid A, a phosphorylated glycolipid that anchors the lipopolysaccharide to the outer membrane of the cell. The chain is UDP-2,3-diacylglucosamine hydrolase from Xylella fastidiosa (strain M12).